Consider the following 355-residue polypeptide: 3-isopropylmalate dehydrogenase (355 aa).

78–91 is an NAD(+) binding site; that stretch reads GYKWDNLPRPERPE. Substrate is bound by residues arginine 98, arginine 136, and aspartate 226. The Mg(2+) site is built by aspartate 226, aspartate 250, and aspartate 254. 284-296 contacts NAD(+); sequence GSAPDIAGQDKAN.

The protein belongs to the isocitrate and isopropylmalate dehydrogenases family. LeuB type 1 subfamily. Homodimer. Requires Mg(2+) as cofactor. It depends on Mn(2+) as a cofactor.

The protein resides in the cytoplasm. The enzyme catalyses (2R,3S)-3-isopropylmalate + NAD(+) = 4-methyl-2-oxopentanoate + CO2 + NADH. It functions in the pathway amino-acid biosynthesis; L-leucine biosynthesis; L-leucine from 3-methyl-2-oxobutanoate: step 3/4. Functionally, catalyzes the oxidation of 3-carboxy-2-hydroxy-4-methylpentanoate (3-isopropylmalate) to 3-carboxy-4-methyl-2-oxopentanoate. The product decarboxylates to 4-methyl-2 oxopentanoate. This is 3-isopropylmalate dehydrogenase (leuB) from Arthrospira platensis (Spirulina platensis).